We begin with the raw amino-acid sequence, 365 residues long: UDP-N-acetylglucosamine--N-acetylmuramyl-(pentapeptide) pyrophosphoryl-undecaprenol N-acetylglucosamine transferase (365 aa).

UDP-N-acetyl-alpha-D-glucosamine is bound by residues 19-21 (TGG), Asn-131, Arg-170, Ser-201, Ile-255, 274-279 (ALTVTE), and Gln-300.

The protein belongs to the glycosyltransferase 28 family. MurG subfamily.

It localises to the cell inner membrane. The catalysed reaction is di-trans,octa-cis-undecaprenyl diphospho-N-acetyl-alpha-D-muramoyl-L-alanyl-D-glutamyl-meso-2,6-diaminopimeloyl-D-alanyl-D-alanine + UDP-N-acetyl-alpha-D-glucosamine = di-trans,octa-cis-undecaprenyl diphospho-[N-acetyl-alpha-D-glucosaminyl-(1-&gt;4)]-N-acetyl-alpha-D-muramoyl-L-alanyl-D-glutamyl-meso-2,6-diaminopimeloyl-D-alanyl-D-alanine + UDP + H(+). It functions in the pathway cell wall biogenesis; peptidoglycan biosynthesis. In terms of biological role, cell wall formation. Catalyzes the transfer of a GlcNAc subunit on undecaprenyl-pyrophosphoryl-MurNAc-pentapeptide (lipid intermediate I) to form undecaprenyl-pyrophosphoryl-MurNAc-(pentapeptide)GlcNAc (lipid intermediate II). The protein is UDP-N-acetylglucosamine--N-acetylmuramyl-(pentapeptide) pyrophosphoryl-undecaprenol N-acetylglucosamine transferase of Acinetobacter baumannii (strain SDF).